The chain runs to 413 residues: Imidazolonepropionase (413 aa).

Residues H70 and H72 each contribute to the Fe(3+) site. Residues H70 and H72 each coordinate Zn(2+). The 4-imidazolone-5-propanoate site is built by R79, Y142, and H175. An N-formimidoyl-L-glutamate-binding site is contributed by Y142. H240 lines the Fe(3+) pocket. H240 is a Zn(2+) binding site. 4-imidazolone-5-propanoate is bound at residue E243. D315 is a binding site for Fe(3+). D315 is a binding site for Zn(2+). N317 and G319 together coordinate N-formimidoyl-L-glutamate. S320 is a binding site for 4-imidazolone-5-propanoate.

The protein belongs to the metallo-dependent hydrolases superfamily. HutI family. Requires Zn(2+) as cofactor. Fe(3+) is required as a cofactor.

The protein localises to the cytoplasm. The enzyme catalyses 4-imidazolone-5-propanoate + H2O = N-formimidoyl-L-glutamate. The protein operates within amino-acid degradation; L-histidine degradation into L-glutamate; N-formimidoyl-L-glutamate from L-histidine: step 3/3. Functionally, catalyzes the hydrolytic cleavage of the carbon-nitrogen bond in imidazolone-5-propanoate to yield N-formimidoyl-L-glutamate. It is the third step in the universal histidine degradation pathway. The polypeptide is Imidazolonepropionase (Treponema denticola (strain ATCC 35405 / DSM 14222 / CIP 103919 / JCM 8153 / KCTC 15104)).